The sequence spans 322 residues: Ribonucleoside-diphosphate reductase small subunit (322 aa).

Fe cation-binding residues include Asp70, Glu101, and His104. Tyr108 is a catalytic residue. Positions 163, 197, and 200 each coordinate Fe cation.

This sequence belongs to the ribonucleoside diphosphate reductase small chain family. In terms of assembly, heterodimer of a large and a small subunit. Requires Fe cation as cofactor.

It catalyses the reaction a 2'-deoxyribonucleoside 5'-diphosphate + [thioredoxin]-disulfide + H2O = a ribonucleoside 5'-diphosphate + [thioredoxin]-dithiol. Provides the precursors necessary for DNA synthesis. Catalyzes the biosynthesis of deoxyribonucleotides from the corresponding ribonucleotides. In Plasmodium falciparum (isolate FCR-3 / Gambia), this protein is Ribonucleoside-diphosphate reductase small subunit (RNR2).